Consider the following 453-residue polypeptide: Homogentisate 1,2-dioxygenase (453 aa).

His-304 (proton acceptor) is an active-site residue. 2 residues coordinate Fe cation: His-347 and Glu-353. Residues Tyr-362 and His-383 each contribute to the homogentisate site. His-383 serves as a coordination point for Fe cation.

It belongs to the homogentisate dioxygenase family. As to quaternary structure, hexamer; dimer of trimers. Requires Fe cation as cofactor.

It catalyses the reaction homogentisate + O2 = 4-maleylacetoacetate + H(+). Its pathway is amino-acid degradation; L-phenylalanine degradation; acetoacetate and fumarate from L-phenylalanine: step 4/6. Functionally, involved in the catabolism of homogentisate (2,5-dihydroxyphenylacetate or 2,5-OH-PhAc), a central intermediate in the degradation of phenylalanine and tyrosine. Catalyzes the oxidative ring cleavage of the aromatic ring of homogentisate to yield maleylacetoacetate. In Sinorhizobium fredii (strain NBRC 101917 / NGR234), this protein is Homogentisate 1,2-dioxygenase.